Reading from the N-terminus, the 40-residue chain is MFDALANINWEVIFQLTSVALIIIAGPAVIFVLAFRNGNL.

The chain crosses the membrane as a helical span at residues Val12–Val32.

It belongs to the Psb30/Ycf12 family. PSII is composed of 1 copy each of membrane proteins PsbA, PsbB, PsbC, PsbD, PsbE, PsbF, PsbH, PsbI, PsbJ, PsbK, PsbL, PsbM, PsbT, PsbX, PsbY, PsbZ, Psb30/Ycf12, peripheral proteins PsbO, CyanoQ (PsbQ), PsbU, PsbV and a large number of cofactors. It forms dimeric complexes.

It localises to the cellular thylakoid membrane. In terms of biological role, a core subunit of photosystem II (PSII), probably helps stabilize the reaction center. This Nostoc sp. (strain PCC 7120 / SAG 25.82 / UTEX 2576) protein is Photosystem II reaction center protein Psb30.